Consider the following 117-residue polypeptide: Appetite-regulating hormone (117 aa).

Positions 1–23 (MVSSATICSLLLLSMLWMDMAMA) are cleaved as a signal peptide. The O-decanoyl serine; alternate moiety is linked to residue Ser26. The O-hexanoyl serine; alternate moiety is linked to residue Ser26. Residue Ser26 is the site of O-octanoyl serine; alternate attachment. The interval 28–68 (LSPEHQKAQQRKESKKPPAKLQPRALEGWLHPEDRGQAEEA) is disordered. The segment covering 31–43 (EHQKAQQRKESKK) has biased composition (basic and acidic residues). Residues 52 to 75 (ALEGWLHPEDRGQAEEAEEELEIR) constitute a propeptide, removed in mature form. Leu98 is subject to Leucine amide. Positions 99 to 117 (GKFLQDILWEEVKEAPANK) are cleaved as a propeptide — removed in mature form.

This sequence belongs to the motilin family. In terms of processing, O-octanoylated by GOAT/MBOAT4. O-octanoylation is essential for ghrelin activity. The replacement of Ser-26 by aromatic tryptophan preserves ghrelin activity. Amidation of Leu-98 is essential for obestatin activity. In terms of tissue distribution, ghrelin is broadly expressed with higher expression in the stomach. Very low levels are detected in the hypothalamus, heart, lung, pancreas, intestine and adipose tissue. Obestatin is most highly expressed in jejunum, and also found in duodenum, stomach, pituitary, ileum, liver, hypothalamus and heart. Expressed in low levels in pancreas, cerebellum, cerebrum, kidney, testis, ovary colon and lung.

The protein localises to the secreted. Its function is as follows. Ghrelin is the ligand for growth hormone secretagogue receptor type 1 (GHSR). Induces the release of growth hormone from the pituitary. Has an appetite-stimulating effect, induces adiposity and stimulates gastric acid secretion. Involved in growth regulation. Obestatin may be the ligand for GPR39. May have an appetite-reducing effect resulting in decreased food intake. May reduce gastric emptying activity and jejunal motility. This chain is Appetite-regulating hormone (Ghrl), found in Rattus norvegicus (Rat).